A 269-amino-acid chain; its full sequence is Thymidylate synthase (269 aa).

Residues Arg-21 and 125–126 contribute to the dUMP site; that span reads RR. Cys-145 acts as the Nucleophile in catalysis. DUMP is bound by residues 171–174, Asn-182, and 212–214; these read RSGD and HVY. Asp-174 is a binding site for (6R)-5,10-methylene-5,6,7,8-tetrahydrofolate. Ala-268 serves as a coordination point for (6R)-5,10-methylene-5,6,7,8-tetrahydrofolate.

The protein belongs to the thymidylate synthase family. Bacterial-type ThyA subfamily. As to quaternary structure, homodimer.

It is found in the cytoplasm. It catalyses the reaction dUMP + (6R)-5,10-methylene-5,6,7,8-tetrahydrofolate = 7,8-dihydrofolate + dTMP. It participates in pyrimidine metabolism; dTTP biosynthesis. Its function is as follows. Catalyzes the reductive methylation of 2'-deoxyuridine-5'-monophosphate (dUMP) to 2'-deoxythymidine-5'-monophosphate (dTMP) while utilizing 5,10-methylenetetrahydrofolate (mTHF) as the methyl donor and reductant in the reaction, yielding dihydrofolate (DHF) as a by-product. This enzymatic reaction provides an intracellular de novo source of dTMP, an essential precursor for DNA biosynthesis. This Cutibacterium acnes (strain DSM 16379 / KPA171202) (Propionibacterium acnes) protein is Thymidylate synthase.